The primary structure comprises 55 residues: Large ribosomal subunit protein bL33 (55 aa).

It belongs to the bacterial ribosomal protein bL33 family.

The protein is Large ribosomal subunit protein bL33 of Caulobacter sp. (strain K31).